The chain runs to 254 residues: Transmembrane protein 70, mitochondrial (254 aa).

A mitochondrion-targeting transit peptide spans M1–C78. Over S79–S112 the chain is Mitochondrial matrix. A helical transmembrane segment spans residues L113–L133. Over P134–Q136 the chain is Mitochondrial intermembrane. A helical membrane pass occupies residues I137 to L157. Topologically, residues T158–K254 are mitochondrial matrix.

Belongs to the TMEM70 family. Homooligomer. Interacts (homooligomer form) with ATP5MC1; this interaction facilitates the oligomer formation of subunit c/ATP5MC1 (c-ring) and the c-ring membrane insertion and also protects ATP5MC1 against intramitochondrial proteolysis. Interacts with the core subunits TMEM126B, NDUFAF1, ECSIT and ACAD9 of the MCIA complex. Interacts with ATP5MC3, TMEM242 and TIMMDC1.

It is found in the mitochondrion inner membrane. In terms of biological role, scaffold protein that participates in the c-ring assembly of mitochondrial ATP synthase (F(1)F(0) ATP synthase or complex V) by facilitating the membrane insertion and oligomer formation of the subunit c/ATP5MC1 through its interaction. Therefore, participates in the early stage of mitochondrial ATP synthase biogenesis and also protects subunit c/ATP5MC1 against intramitochondrial proteolysis. In addition, binds the mitochondrial proton-transporting ATP synthase complexes I and may play a role in the stability of its membrane-bound subassemblies. The sequence is that of Transmembrane protein 70, mitochondrial from Bos taurus (Bovine).